A 115-amino-acid chain; its full sequence is Large ribosomal subunit protein bL20 (115 aa).

It belongs to the bacterial ribosomal protein bL20 family.

Its function is as follows. Binds directly to 23S ribosomal RNA and is necessary for the in vitro assembly process of the 50S ribosomal subunit. It is not involved in the protein synthesizing functions of that subunit. This chain is Large ribosomal subunit protein bL20, found in Prochlorococcus marinus (strain SARG / CCMP1375 / SS120).